The chain runs to 633 residues: Extracellular metalloproteinase 3 (633 aa).

The N-terminal stretch at 1 to 18 (MHGLLLAGLLALPMNVLA) is a signal peptide. The propeptide occupies 19–246 (HPAEQHASNV…VHNVVDYVAS (228 aa)). N-linked (GlcNAc...) asparagine glycosylation occurs at Asn-410. His-429 is a Zn(2+) binding site. Glu-430 is an active-site residue. His-433 provides a ligand contact to Zn(2+). Asn-480 and Asn-622 each carry an N-linked (GlcNAc...) asparagine glycan.

This sequence belongs to the peptidase M36 family. Zn(2+) serves as cofactor.

Its subcellular location is the secreted. In terms of biological role, secreted metalloproteinase probably acting as a virulence factor. This Arthroderma benhamiae (Trichophyton mentagrophytes) protein is Extracellular metalloproteinase 3 (MEP3).